The sequence spans 332 residues: Fructose-1,6-bisphosphatase class 1 (332 aa).

The Mg(2+) site is built by Glu94, Asp116, Leu118, and Asp119. Substrate-binding positions include Asp119–Ser122, Asn211, Tyr239, Tyr257–Tyr259, and Lys269. Residue Glu275 coordinates Mg(2+).

Belongs to the FBPase class 1 family. Homotetramer. The cofactor is Mg(2+).

The protein localises to the cytoplasm. The enzyme catalyses beta-D-fructose 1,6-bisphosphate + H2O = beta-D-fructose 6-phosphate + phosphate. It functions in the pathway carbohydrate biosynthesis; Calvin cycle. This chain is Fructose-1,6-bisphosphatase class 1, found in Synechococcus sp. (strain JA-3-3Ab) (Cyanobacteria bacterium Yellowstone A-Prime).